Consider the following 366-residue polypeptide: Chorismate synthase (366 aa).

Residues R48 and R54 each coordinate NADP(+). Residues 125–127, 238–239, G278, 293–297, and R319 each bind FMN; these read RSS, NA, and KPTSS.

The protein belongs to the chorismate synthase family. As to quaternary structure, homotetramer. FMNH2 serves as cofactor.

It catalyses the reaction 5-O-(1-carboxyvinyl)-3-phosphoshikimate = chorismate + phosphate. It participates in metabolic intermediate biosynthesis; chorismate biosynthesis; chorismate from D-erythrose 4-phosphate and phosphoenolpyruvate: step 7/7. In terms of biological role, catalyzes the anti-1,4-elimination of the C-3 phosphate and the C-6 proR hydrogen from 5-enolpyruvylshikimate-3-phosphate (EPSP) to yield chorismate, which is the branch point compound that serves as the starting substrate for the three terminal pathways of aromatic amino acid biosynthesis. This reaction introduces a second double bond into the aromatic ring system. This chain is Chorismate synthase, found in Ralstonia pickettii (strain 12J).